A 453-amino-acid chain; its full sequence is Carbamoyl phosphate synthase arginine-specific small chain (453 aa).

Residues 1-28 (MFARVFKAMPARAPAFTSVNASIQSRFM) constitute a mitochondrion transit peptide. Positions 219-406 (HVAVIDCGVK…LDSVVKYKNH (188 aa)) constitute a Glutamine amidotransferase type-1 domain. The active-site Nucleophile is cysteine 295. Active-site residues include histidine 379 and glutamate 381.

This sequence belongs to the CarA family. In terms of assembly, heterodimer composed of 2 chains; the small (or glutamine) chain promotes the hydrolysis of glutamine to ammonia, which is used by the large (or ammonia) chain to synthesize carbamoyl phosphate.

It is found in the mitochondrion matrix. The catalysed reaction is hydrogencarbonate + L-glutamine + 2 ATP + H2O = carbamoyl phosphate + L-glutamate + 2 ADP + phosphate + 2 H(+). It catalyses the reaction L-glutamine + H2O = L-glutamate + NH4(+). Its pathway is amino-acid biosynthesis; L-arginine biosynthesis; carbamoyl phosphate from bicarbonate: step 1/1. In terms of biological role, small subunit of the arginine-specific carbamoyl phosphate synthase (CPSase). CPSase catalyzes the formation of carbamoyl phosphate from the ammonia moiety of glutamine, carbonate, and phosphate donated by ATP, the first step of the arginine biosynthetic pathway. The small subunit (glutamine amidotransferase) binds and cleaves glutamine to supply the large subunit with the substrate ammonia. In Aspergillus niger (strain ATCC MYA-4892 / CBS 513.88 / FGSC A1513), this protein is Carbamoyl phosphate synthase arginine-specific small chain (cpa1).